We begin with the raw amino-acid sequence, 956 residues long: Pyruvate, phosphate dikinase, chloroplastic (956 aa).

The N-terminal 79 residues, 1-79 (MMSSLFVEGM…AVLNPVSPPV (79 aa)), are a transit peptide targeting the chloroplast. Thr536 bears the Phosphothreonine; by PDRP1 mark. His538 serves as the catalytic Tele-phosphohistidine intermediate. Substrate-binding residues include Arg644, Arg701, Glu830, Gly851, Thr852, Asn853, and Asp854. Position 830 (Glu830) interacts with Mg(2+). Asp854 contributes to the Mg(2+) binding site. Cys916 (proton donor) is an active-site residue.

Belongs to the PEP-utilizing enzyme family. In terms of assembly, homotetramer. The cofactor is Mg(2+). Post-translationally, phosphorylation of Thr-536 in the dark inactivates the enzyme. Dephosphorylation upon light stimulation reactivates the enzyme.

The protein localises to the plastid. It is found in the chloroplast. It carries out the reaction pyruvate + phosphate + ATP = phosphoenolpyruvate + AMP + diphosphate + H(+). Its activity is regulated as follows. Activated by light-induced dephosphorylation. Inhibited by dark-induced phosphorylation. Both reactions are catalyzed by PDRP1. In terms of biological role, formation of phosphoenolpyruvate. This chain is Pyruvate, phosphate dikinase, chloroplastic (PPDK), found in Flaveria pringlei.